Consider the following 226-residue polypeptide: Ribose-5-phosphate isomerase A (226 aa).

Substrate-binding positions include 26–29 (TGST), 82–85 (DGAD), and 95–98 (KGGG). E104 functions as the Proton acceptor in the catalytic mechanism. A substrate-binding site is contributed by K122.

This sequence belongs to the ribose 5-phosphate isomerase family. In terms of assembly, homodimer.

It catalyses the reaction aldehydo-D-ribose 5-phosphate = D-ribulose 5-phosphate. Its pathway is carbohydrate degradation; pentose phosphate pathway; D-ribose 5-phosphate from D-ribulose 5-phosphate (non-oxidative stage): step 1/1. Its function is as follows. Catalyzes the reversible conversion of ribose-5-phosphate to ribulose 5-phosphate. The sequence is that of Ribose-5-phosphate isomerase A from Streptococcus uberis (strain ATCC BAA-854 / 0140J).